A 346-amino-acid polypeptide reads, in one-letter code: Cell division protein ZipA (346 aa).

At 1-6 the chain is on the periplasmic side; it reads MEDLQL. The chain crosses the membrane as a helical span at residues 7-27; the sequence is VLFVLGAIAIVAVLVHGFWSI. At 28 to 346 the chain is on the cytoplasmic side; it reads RRQQPKSLKD…DYLHRIRANA (319 aa). 2 disordered regions span residues 76-103 and 121-145; these read ANEA…QPVE and QPDF…RQEP.

It belongs to the ZipA family. As to quaternary structure, interacts with FtsZ via their C-terminal domains.

It is found in the cell inner membrane. In terms of biological role, essential cell division protein that stabilizes the FtsZ protofilaments by cross-linking them and that serves as a cytoplasmic membrane anchor for the Z ring. Also required for the recruitment to the septal ring of downstream cell division proteins. The protein is Cell division protein ZipA of Shewanella sp. (strain MR-4).